A 477-amino-acid chain; its full sequence is MPKTPNGKLDRKSIAALLLRNAKRDMNGVVNDVEKMTVREGELRLLWERVLPTLGDLRLGPSSDFFMCGGNSMLLMKLQKAIKETTGIRVSTKDLYESSTLRAMTHCVFDRANRADDDAAPIDWAVETSLPASLQTQIQDLATSSPPEAGGHGTNGTEVLLTGATSFLGSHLLRSLLSSPRVKKVHCVAVPADEQATLFSHDTRIVCYSGTLLSPTLGVTPQERRTLEQSVHVIVHAGAHGHCLNRFDSLRAPNLQSLHFLATLALPRCVTILFLSSSRVVLLSGDTAPAPASMRSYPPAVDGKDGYTASKWAGEVFLENLVAHVENVASSASSPSVFWRSSLNVEVHRACTLVSESAPNSDAMNAILRHSLDMRCAPRLERAEGYLDFAPMESIVAKITVHAVEMATAVQQQQQQQQRQSQPPRDDAADGSPTERARGLRIAITLAVSSRPWATLGRIWRGRMVGDPKNWIYKSGL.

The 79-residue stretch at Glu34–Ala112 folds into the Carrier domain. Residue Ser72 is modified to O-(pantetheine 4'-phosphoryl)serine. Positions Leu161–Val322 are ketoreductase (KR) domain. Positions Val410–Glu435 are disordered. The segment covering Gln411–Gln422 has biased composition (low complexity). The segment covering Pro424–Glu435 has biased composition (basic and acidic residues).

It participates in mycotoxin biosynthesis. Polyketide synthase-related protein; part of the gene cluster that mediates the biosynthesis of 10,11-dehydrocurvularin, a prevalent fungal phytotoxin with heat shock response and immune-modulatory activities. The highly reducing polyketide synthase Dhc3 is responsible for biosynthesis up to the tetraketide stage. The non-reducing polyketide synthase Dhc5 then conducts four additional chain extension cycles, producing the unreduced part of the nascent octaketide from C-1 to C-8 in 10,11-dehydrocurvularin. The role of Dhc1 in 10,11-dehydrocurvularin biosynthesis has not been identified yet. This chain is Polyketide synthase-related protein Dhc1, found in Alternaria cinerariae.